The following is a 213-amino-acid chain: MKNYYLVDEKRKTPVSTWEKISQALRRSVKLELFVGLFVMMRELLKRNNSATIKYPFEKVKLDNRYRAVHRLMRFIESENERCIGCGLCEKICISNCIRMETSLDENGRKKVGNYSINLGRCIYCGFCAEVCPELAIVHGIEYENAAEQRSYFGYKQDFLTPIDKLKNQVEFEGAGSLRKDANLWVKKTPNYYDVMQERVLENQNTKEQGENK.

4Fe-4S ferredoxin-type domains follow at residues 74–103 and 113–142; these read RFIESENERCIGCGLCEKICISNCIRMETS and GNYSINLGRCIYCGFCAEVCPELAIVHGIE. Residues Cys-83, Cys-86, Cys-89, Cys-93, Cys-122, Cys-125, Cys-128, and Cys-132 each contribute to the [4Fe-4S] cluster site.

This sequence belongs to the complex I 23 kDa subunit family. As to quaternary structure, NDH-1 is composed of 14 different subunits. Subunits NuoA, H, J, K, L, M, N constitute the membrane sector of the complex. The cofactor is [4Fe-4S] cluster.

Its subcellular location is the cell inner membrane. The enzyme catalyses a quinone + NADH + 5 H(+)(in) = a quinol + NAD(+) + 4 H(+)(out). NDH-1 shuttles electrons from NADH, via FMN and iron-sulfur (Fe-S) centers, to quinones in the respiratory chain. The immediate electron acceptor for the enzyme in this species is believed to be ubiquinone. Couples the redox reaction to proton translocation (for every two electrons transferred, four hydrogen ions are translocated across the cytoplasmic membrane), and thus conserves the redox energy in a proton gradient. The polypeptide is NADH-quinone oxidoreductase subunit I (Campylobacter jejuni subsp. doylei (strain ATCC BAA-1458 / RM4099 / 269.97)).